The sequence spans 66 residues: Muscarinic toxin alpha (66 aa).

4 disulfides stabilise this stretch: Cys-3–Cys-24, Cys-17–Cys-42, Cys-46–Cys-58, and Cys-59–Cys-64.

This sequence belongs to the three-finger toxin family. Short-chain subfamily. Aminergic toxin sub-subfamily. Expressed by the venom gland.

The protein localises to the secreted. Selectively binds with high-affinity to the a2B-adrenoceptor subtype (ADRA2B). The toxin reversibly binds to ADRA2B, and its mode of inhibition is non-competitive. The toxin has also been described to bind with high affinity to all muscarinic receptor subtypes (Ki=23 nM (on CHRM1), Ki=44 nM (on CHRM2), Ki=3 nM (on CHRM3), Ki=5 nM (on CHRM4), and Ki=8 nM (on CHRM5)) but no other data support these affinity values. The polypeptide is Muscarinic toxin alpha (Dendroaspis polylepis polylepis (Black mamba)).